We begin with the raw amino-acid sequence, 300 residues long: CDP-diacylglycerol--serine O-phosphatidyltransferase (300 aa).

The next 6 membrane-spanning stretches (helical) occupy residues 10–30 (AVNL…AGLT), 74–94 (IDSL…LYAT), 95–115 (MLST…CVVL), 135–155 (EFFV…LLAL), 162–182 (GWWT…MLLI), and 207–227 (LAIF…VIIL).

This sequence belongs to the CDP-alcohol phosphatidyltransferase class-I family.

Its subcellular location is the cell membrane. It catalyses the reaction a CDP-1,2-diacyl-sn-glycerol + L-serine = a 1,2-diacyl-sn-glycero-3-phospho-L-serine + CMP + H(+). The protein is CDP-diacylglycerol--serine O-phosphatidyltransferase (pssA) of Mycobacterium leprae (strain TN).